The following is a 349-amino-acid chain: KH domain-containing, RNA-binding, signal transduction-associated protein 2 (349 aa).

Positions Leu-65–Ile-135 constitute a KH domain. Disordered regions lie at residues Ser-181–Ala-263 and Glu-321–Tyr-349. Over residues Arg-218 to Gly-231 the composition is skewed to low complexity. Omega-N-methylarginine is present on residues Arg-230 and Arg-240. Positions Gly-340–Tyr-349 are enriched in basic and acidic residues.

The protein belongs to the KHDRBS family. In terms of assembly, self-associates to form homooligomers. Interacts with KHDRBS1/SAM68; heterooligomer formation of KHDRBS family proteins may modulate RNA substrate specificity. Interacts with RBMX, SAFB, SFRS9 and YTHDC1. Interacts with FYN and PLCG1 (via SH3 domain). Interacts (phosphorylated) with FYN, GRB2, PLCG1 and RASA1 (via SH2 domain). Post-translationally, methylated. Tyrosine phosphorylated by FYN, PTK6 and SRC. Tyrosine phosphorylated by SRC during mitosis. In terms of tissue distribution, expressed in heart, skin, brain, colon, spleen, kidney, cervix and testis. In adult cerebellum expressed predominantly in Purkinje cells and in the hippocampus is abundantly expressed in glutamatergic dentate granule cells and in specific inhibitory Schaffer collateral-associated and path-associated interneurons; expression is restricted to neuronal subpopulations largely non-overlapping with expression of KHDRBS3/SLM-2 (at protein level).

It localises to the nucleus. RNA-binding protein that plays a role in the regulation of alternative splicing and influences mRNA splice site selection and exon inclusion. Binds both poly(A) and poly(U) homopolymers. Phosphorylation by PTK6 inhibits its RNA-binding ability. Induces an increased concentration-dependent incorporation of exon in CD44 pre-mRNA by direct binding to purine-rich exonic enhancer. Can regulate alternative splicing of neurexins NRXN1-3 in the laminin G-like domain 6 containing the evolutionary conserved neurexin alternative spliced segment 4 (AS4) involved in neurexin selective targeting to postsynaptic partners. Regulates cell-type specific alternative splicing of NRXN1 at AS4 and acts synergystically with SAM68 in exon skipping. In contrast acts antagonistically with SAM68 in NRXN3 exon skipping at AS4. Its phosphorylation by FYN inhibits its ability to regulate splice site selection. May function as an adapter protein for Src kinases during mitosis. This chain is KH domain-containing, RNA-binding, signal transduction-associated protein 2 (Khdrbs2), found in Mus musculus (Mouse).